Consider the following 99-residue polypeptide: Large ribosomal subunit protein uL23 (99 aa).

The protein belongs to the universal ribosomal protein uL23 family. As to quaternary structure, part of the 50S ribosomal subunit. Contacts protein L29, and trigger factor when it is bound to the ribosome.

In terms of biological role, one of the early assembly proteins it binds 23S rRNA. One of the proteins that surrounds the polypeptide exit tunnel on the outside of the ribosome. Forms the main docking site for trigger factor binding to the ribosome. In Oenococcus oeni (strain ATCC BAA-331 / PSU-1), this protein is Large ribosomal subunit protein uL23.